The chain runs to 247 residues: Putative cyclin-T1-1 (247 aa).

It belongs to the cyclin family. Cyclin T subfamily.

This Arabidopsis thaliana (Mouse-ear cress) protein is Putative cyclin-T1-1 (CYCT1-1).